The following is a 299-amino-acid chain: HTH-type transcriptional regulator ArgP (299 aa).

The region spanning L4–T60 is the HTH lysR-type domain. The segment at residues F21–K40 is a DNA-binding region (H-T-H motif).

The protein belongs to the LysR transcriptional regulatory family. In terms of assembly, homodimer.

In terms of biological role, controls the transcription of genes involved in arginine and lysine metabolism. This Aeromonas salmonicida protein is HTH-type transcriptional regulator ArgP.